The sequence spans 878 residues: E3 ubiquitin-protein ligase SH3RF3 (878 aa).

Residues 19–40 form a disordered region; that stretch reads RGEGEDRQGEQQRGAQARTEED. An RING-type zinc finger spans residues 52–93; it reads CSVCLERLDTTAKVLPCQHTFCRRCLESIVCSRHELRCPECR. The tract at residues 120 to 145 is disordered; the sequence is PRTGASPGSSPPARPGPGTFSALAGG. 2 consecutive SH3 domains span residues 187–246 and 249–312; these read SQLP…CVRP and QALP…LNDS. Positions 364 to 433 are interaction with RAC1; sequence RVDSKKNAKK…TVPTQDSSSA (70 aa). S395 is modified (phosphoserine). Residues 458-519 enclose the SH3 3 domain; it reads LPLNVYLALY…PGNYVTPVSR (62 aa). Disordered stretches follow at residues 574 to 659 and 688 to 758; these read QHPA…CPRP and PISG…MGPE. Composition is skewed to polar residues over residues 590-609, 618-633, 643-653, and 690-699; these read AQPTASQAGDTTIPTATHAS, ATVSPLRTQTSPSRLP, ASPQHGQQSPA, and SGLSTPSLIN. Over residues 703-716 the composition is skewed to basic and acidic residues; it reads KPDDKKNEKKEKKS. Polar residues predominate over residues 741 to 752; sequence HDPQSAMDTSLQ. Residue S792 is modified to Phosphoserine. Residues 819–878 enclose the SH3 4 domain; it reads LPRERYRVVVSYPPQSEAEIELKEGDIVFVHKKHEDGWFKGTLQRNGRTGLFPGSFVESF.

It belongs to the SH3RF family. Interacts (via SH3 domain 3) with PAK2. Interacts with RAC1 (GTP-bound form). In terms of processing, autoubiquitinated.

It carries out the reaction S-ubiquitinyl-[E2 ubiquitin-conjugating enzyme]-L-cysteine + [acceptor protein]-L-lysine = [E2 ubiquitin-conjugating enzyme]-L-cysteine + N(6)-ubiquitinyl-[acceptor protein]-L-lysine.. It participates in protein modification; protein ubiquitination. Its function is as follows. Has E3 ubiquitin-protein ligase activity. This Mus musculus (Mouse) protein is E3 ubiquitin-protein ligase SH3RF3 (Sh3rf3).